A 324-amino-acid polypeptide reads, in one-letter code: MKRGLFLTLFFLLILGIAGHWAWNSFGSKPNSMQVTNNIELIEIDHDVLIGLGNGFFVKVDNSTFMMSLKVLVKGEQVEHRVYRLKNGKSELVGKLDVPFVVDVPALWIDNEVLLFGGMNPGNITLVPVVYAYNPENGSMREFAEMPFRDYDQLSLLWDGSKAYLFVRFLNGNLSAYSFDPYAKKFQCLDLGFPEGFVFPGTSKYAAVWYKGKGYFVHGDRIAVFDPSSKNLVWAQVRLPDKYWARTAVATDRGIYIFGGFDDNVNFSRNIYLFVPENNTLTRVGTLPYPLGQAPGGWDGRRIYIVGGRGPGPNKYIVIFTPKG.

Kelch repeat units follow at residues 112-160 (EVLL…LWDG), 254-301 (GIYI…WDGR), and 303-323 (IYIV…FTPK).

The chain is Kelch domain-containing protein PF0436 from Pyrococcus furiosus (strain ATCC 43587 / DSM 3638 / JCM 8422 / Vc1).